The sequence spans 200 residues: 3-isopropylmalate dehydratase small subunit (200 aa).

This sequence belongs to the LeuD family. LeuD type 1 subfamily. As to quaternary structure, heterodimer of LeuC and LeuD.

It catalyses the reaction (2R,3S)-3-isopropylmalate = (2S)-2-isopropylmalate. It participates in amino-acid biosynthesis; L-leucine biosynthesis; L-leucine from 3-methyl-2-oxobutanoate: step 2/4. Its function is as follows. Catalyzes the isomerization between 2-isopropylmalate and 3-isopropylmalate, via the formation of 2-isopropylmaleate. The chain is 3-isopropylmalate dehydratase small subunit from Aliivibrio fischeri (strain MJ11) (Vibrio fischeri).